The sequence spans 320 residues: UDP-N-acetylenolpyruvoylglucosamine reductase (320 aa).

The 167-residue stretch at 34 to 200 (RAGGLAEVFF…TSAVFEGFAE (167 aa)) folds into the FAD-binding PCMH-type domain. Arg180 is an active-site residue. Catalysis depends on Ser229, which acts as the Proton donor. Residue Glu299 is part of the active site.

It belongs to the MurB family. It depends on FAD as a cofactor.

It localises to the cytoplasm. The catalysed reaction is UDP-N-acetyl-alpha-D-muramate + NADP(+) = UDP-N-acetyl-3-O-(1-carboxyvinyl)-alpha-D-glucosamine + NADPH + H(+). It participates in cell wall biogenesis; peptidoglycan biosynthesis. Cell wall formation. This is UDP-N-acetylenolpyruvoylglucosamine reductase from Mesorhizobium japonicum (strain LMG 29417 / CECT 9101 / MAFF 303099) (Mesorhizobium loti (strain MAFF 303099)).